The primary structure comprises 145 residues: Ribosomal RNA large subunit methyltransferase H (145 aa).

Residues Leu-64, Gly-93, and 112-117 contribute to the S-adenosyl-L-methionine site; that span reads LSPLTF.

This sequence belongs to the RNA methyltransferase RlmH family. As to quaternary structure, homodimer.

It localises to the cytoplasm. The catalysed reaction is pseudouridine(1915) in 23S rRNA + S-adenosyl-L-methionine = N(3)-methylpseudouridine(1915) in 23S rRNA + S-adenosyl-L-homocysteine + H(+). In terms of biological role, specifically methylates the pseudouridine at position 1915 (m3Psi1915) in 23S rRNA. This chain is Ribosomal RNA large subunit methyltransferase H, found in Prochlorococcus marinus (strain NATL2A).